Consider the following 201-residue polypeptide: Ubiquitin-conjugating enzyme E2 E2 (201 aa).

Residues 1–10 (MSTEAQRVDD) show a composition bias toward basic and acidic residues. The tract at residues 1 to 55 (MSTEAQRVDDSPSTSGGSSDGDQRESVQQEPEREQVQPKKKEGKISSKTAAKLST) is disordered. The residue at position 2 (Ser-2) is an N-acetylserine. Phosphoserine occurs at positions 11, 15, 18, and 19. Residues 21–45 (GDQRESVQQEPEREQVQPKKKEGKI) are compositionally biased toward basic and acidic residues. The span at 46–55 (SSKTAAKLST) shows a compositional bias: low complexity. Positions 55-201 (TSAKRIQKEL…ARQWTKRYAT (147 aa)) constitute a UBC core domain. The active-site Glycyl thioester intermediate is the Cys-139.

This sequence belongs to the ubiquitin-conjugating enzyme family. In terms of processing, autoubiquitinated in vitro.

It catalyses the reaction S-ubiquitinyl-[E1 ubiquitin-activating enzyme]-L-cysteine + [E2 ubiquitin-conjugating enzyme]-L-cysteine = [E1 ubiquitin-activating enzyme]-L-cysteine + S-ubiquitinyl-[E2 ubiquitin-conjugating enzyme]-L-cysteine.. It functions in the pathway protein modification; protein ubiquitination. Accepts ubiquitin from the E1 complex and catalyzes its covalent attachment to other proteins. In vitro catalyzes 'Lys-11'- and 'Lys-48'-, as well as 'Lys-63'-linked polyubiquitination. Catalyzes the ISGylation of influenza A virus NS1 protein. The chain is Ubiquitin-conjugating enzyme E2 E2 from Homo sapiens (Human).